The sequence spans 186 residues: Quinone reductase (186 aa).

Residues 13–20 (SLRKESYN), 80–83 (EYNR), and serine 116 contribute to the FMN site.

Belongs to the SsuE family. As to quaternary structure, homotetramer. Dimer of dimers. The tetrameric configuration has a central role in chromate reductase activity. The cofactor is FMN.

The catalysed reaction is a quinone + NADH + H(+) = a quinol + NAD(+). It catalyses the reaction a quinone + NADPH + H(+) = a quinol + NADP(+). The enzyme catalyses Cr(6+) + 2 NADH + O2 = Cr(3+) + superoxide + 2 NAD(+) + 2 H(+). It carries out the reaction Cr(6+) + 2 NADPH + O2 = Cr(3+) + superoxide + 2 NADP(+) + 2 H(+). With respect to regulation, may be inhibited by divalent cations. Its function is as follows. Catalyzes the reduction of quinones. Acts by simultaneous two-electron transfer, avoiding formation of highly reactive semiquinone intermediates and producing quinols that promote tolerance of H(2)O(2). Quinone reduction is probably the primary biological role of ChrR. Can also reduce toxic chromate to insoluble and less toxic Cr(3+). Catalyzes the transfer of three electrons to Cr(6+) producing Cr(3+) and one electron to molecular oxygen. This reaction produces transiently a minimal amount of the toxic Cr(5+) species and reactive oxygen species (ROS). Chromate reduction protects the cell against chromate toxicity, but is likely a secondary activity. Can also reduce potassium ferricyanide and 2,6-dichloroindophenol. During chromate reduction, displays an eightfold preference for NADH over NADPH. In Pseudomonas putida (strain ATCC 47054 / DSM 6125 / CFBP 8728 / NCIMB 11950 / KT2440), this protein is Quinone reductase.